Consider the following 117-residue polypeptide: Large ribosomal subunit protein bL19 (117 aa).

The protein belongs to the bacterial ribosomal protein bL19 family.

Its function is as follows. This protein is located at the 30S-50S ribosomal subunit interface and may play a role in the structure and function of the aminoacyl-tRNA binding site. In Thermotoga neapolitana (strain ATCC 49049 / DSM 4359 / NBRC 107923 / NS-E), this protein is Large ribosomal subunit protein bL19.